A 260-amino-acid chain; its full sequence is HTH-type transcriptional activator FapR (260 aa).

An HTH araC/xylS-type domain is found at E154 to G251. DNA-binding regions (H-T-H motif) lie at residues S171–C192 and I218–Y241.

In terms of assembly, homodimer.

Its function is as follows. Positive regulator of the expression of the 987P operon for the fimbrial protein in enterotoxigenic E.coli. The protein is HTH-type transcriptional activator FapR of Escherichia coli.